The following is a 417-amino-acid chain: Serine hydroxymethyltransferase (417 aa).

Residues Leu-121 and 125–127 (GHL) each bind (6S)-5,6,7,8-tetrahydrofolate. Lys-229 is subject to N6-(pyridoxal phosphate)lysine. 355–357 (SPF) contacts (6S)-5,6,7,8-tetrahydrofolate.

Belongs to the SHMT family. Homodimer. The cofactor is pyridoxal 5'-phosphate.

The protein localises to the cytoplasm. The enzyme catalyses (6R)-5,10-methylene-5,6,7,8-tetrahydrofolate + glycine + H2O = (6S)-5,6,7,8-tetrahydrofolate + L-serine. It functions in the pathway one-carbon metabolism; tetrahydrofolate interconversion. It participates in amino-acid biosynthesis; glycine biosynthesis; glycine from L-serine: step 1/1. In terms of biological role, catalyzes the reversible interconversion of serine and glycine with tetrahydrofolate (THF) serving as the one-carbon carrier. This reaction serves as the major source of one-carbon groups required for the biosynthesis of purines, thymidylate, methionine, and other important biomolecules. Also exhibits THF-independent aldolase activity toward beta-hydroxyamino acids, producing glycine and aldehydes, via a retro-aldol mechanism. The sequence is that of Serine hydroxymethyltransferase from Erwinia tasmaniensis (strain DSM 17950 / CFBP 7177 / CIP 109463 / NCPPB 4357 / Et1/99).